The chain runs to 224 residues: Histone H1.03 (224 aa).

Composition is skewed to low complexity over residues 1–22 (MAET…AKAA) and 30–42 (AAGG…PAGP). Disordered regions lie at residues 1–43 (MAET…AGPS) and 99–224 (QTKG…PKKK). The H15 domain occupies 40–113 (AGPSVTELIT…GASGSFRLSK (74 aa)). Basic residues-rich tracts occupy residues 122–137 (APKK…KPAA), 145–162 (KKPK…KAKK), 170–188 (KAAK…KKAV), and 197–224 (KAVK…PKKK).

This sequence belongs to the histone H1/H5 family.

Its subcellular location is the nucleus. The protein resides in the chromosome. Histones H1 are necessary for the condensation of nucleosome chains into higher-order structures. The polypeptide is Histone H1.03 (Gallus gallus (Chicken)).